The chain runs to 131 residues: DQDCLPGWSFYEGHCYKVFNVKKTWEDAEKFCQKQSNGKHLATIEWLGKANFVAELVTLMKLETHVWIGLRVEDKRQQCSSHWTDGSAVSYENVVHNTKCFGLDQKTGYRTWVALRCELAYHFICMSRVPR.

Intrachain disulfides connect Cys-4–Cys-15, Cys-32–Cys-125, and Cys-100–Cys-117. The region spanning 11-126 (YEGHCYKVFN…CELAYHFICM (116 aa)) is the C-type lectin domain.

Belongs to the snaclec family. Heterodimer; disulfide-linked. In terms of tissue distribution, expressed by the venom gland.

It localises to the secreted. Its function is as follows. Interferes with one step of hemostasis (modulation of platelet aggregation, or coagulation cascade, for example). The chain is Snaclec A13 from Macrovipera lebetinus (Levantine viper).